A 499-amino-acid polypeptide reads, in one-letter code: MLLLLLLLPLLWGTKGMEGDRQYGDGYLLQVQELVTVQEGLCVHVPCSFSYPQDGWTDSDPVHGYWFRAGDRPYQDAPVATNNPDREVQAETQGRFQLLGDIWSNDCSLSIRDARKRDKGSYFFRLERGSMKWSYKSQLNYKTKQLSVFVTALTHRPDILILGTLESGHSRNLTCSVPWACKQGTPPMISWIGASVSSPGPTTARSSVLTLTPKPQDHGTSLTCQVTLPGTGVTTTSTVRLDVSYPPWNLTMTVFQGDATASTALGNGSSLSVLEGQSLRLVCAVNSNPPARLSWTRGSLTLCPSRSSNPGLLELPRVHVRDEGEFTCRAQNAQGSQHISLSLSLQNEGTGTSRPVSQVTLAAVGGAGATALAFLSFCIIFIIVRSCRKKSARPAAGVGDTGMEDAKAIRGSASQGPLTESWKDGNPLKKPPPAVAPSSGEEGELHYATLSFHKVKPQDPQGQEATDSEYSEIKIHKRETAETQACLRNHNPSSKEVRG.

The N-terminal stretch at 1 to 16 is a signal peptide; the sequence is MLLLLLLLPLLWGTKG. Topologically, residues 17–363 are extracellular; that stretch reads MEGDRQYGDG…RPVSQVTLAA (347 aa). Residues Tyr-23, 72–75, Arg-125, and 134–138 contribute to the a carbohydrate site; these read RPYQ and SYKSQ. Residues 40–123 form the Ig-like V-type domain; that stretch reads GLCVHVPCSF…ARKRDKGSYF (84 aa). 3 cysteine pairs are disulfide-bonded: Cys-42–Cys-181, Cys-47–Cys-107, and Cys-175–Cys-224. Ig-like C2-type domains lie at 157-240 and 246-344; these read PDIL…STVR and PPWN…LSLS. Asn-172 carries N-linked (GlcNAc...) asparagine glycosylation. 2 N-linked (GlcNAc...) asparagine glycosylation sites follow: Asn-249 and Asn-267. An intrachain disulfide couples Cys-283 to Cys-328. A helical transmembrane segment spans residues 364–384; it reads VGGAGATALAFLSFCIIFIIV. At 385 to 499 the chain is on the cytoplasmic side; sequence RSCRKKSARP…HNPSSKEVRG (115 aa). Residues 410-443 are disordered; that stretch reads RGSASQGPLTESWKDGNPLKKPPPAVAPSSGEEG. Positions 445-450 match the ITIM motif motif; it reads LHYATL. 2 disordered regions span residues 451 to 470 and 478 to 499; these read SFHK…DSEY and RETA…EVRG. Positions 468–473 match the SLAM-like motif motif; it reads SEYSEI.

This sequence belongs to the immunoglobulin superfamily. SIGLEC (sialic acid binding Ig-like lectin) family. In terms of tissue distribution, expressed specifically on blood cells namely basophil, mast cells and eosinophils.

It is found in the membrane. In terms of biological role, putative adhesion molecule that mediates sialic-acid dependent binding to blood cells. Preferentially binds to alpha-2,3-linked sialic acid. Also binds to alpha-2,6-linked sialic acid. The sialic acid recognition site may be masked by cis interactions with sialic acids on the same cell surface. Recognizes simultaneously epitopes having a terminal N-acetylneuraminic acid (sialic acid) and an underlying 6-O-sulfated galactose. Preferentially binds to Gal-6-sulfated sialyl-Lewis X glycan epitopes. The protein is Sialic acid-binding Ig-like lectin 8 (SIGLEC8) of Homo sapiens (Human).